We begin with the raw amino-acid sequence, 146 residues long: Phospho-2-dehydro-3-deoxyheptonate aldolase (146 aa).

It belongs to the class-II DAHP synthase family. In terms of assembly, homodimer.

The enzyme catalyses D-erythrose 4-phosphate + phosphoenolpyruvate + H2O = 7-phospho-2-dehydro-3-deoxy-D-arabino-heptonate + phosphate. Its pathway is metabolic intermediate biosynthesis; chorismate biosynthesis; chorismate from D-erythrose 4-phosphate and phosphoenolpyruvate: step 1/7. The protein is Phospho-2-dehydro-3-deoxyheptonate aldolase of Streptomyces lividans.